We begin with the raw amino-acid sequence, 145 residues long: 3-dehydroquinate dehydratase (145 aa).

Y23 acts as the Proton acceptor in catalysis. Substrate-binding residues include N75, H81, and D88. Catalysis depends on H101, which acts as the Proton donor. Substrate is bound by residues 102–103 and R112; that span reads IS.

This sequence belongs to the type-II 3-dehydroquinase family. Homododecamer.

The enzyme catalyses 3-dehydroquinate = 3-dehydroshikimate + H2O. It participates in metabolic intermediate biosynthesis; chorismate biosynthesis; chorismate from D-erythrose 4-phosphate and phosphoenolpyruvate: step 3/7. Functionally, catalyzes a trans-dehydration via an enolate intermediate. The protein is 3-dehydroquinate dehydratase of Caldicellulosiruptor bescii (strain ATCC BAA-1888 / DSM 6725 / KCTC 15123 / Z-1320) (Anaerocellum thermophilum).